Here is a 101-residue protein sequence, read N- to C-terminus: Putative RNA-binding protein RbpA (101 aa).

Residues 2–79 (SIYVGNLSYD…RDLKVNKAKP (78 aa)) enclose the RRM domain. Residues 73–83 (KVNKAKPRENR) are compositionally biased toward basic and acidic residues. The segment at 73-101 (KVNKAKPRENRSGGGSFGGGRKSYGGSRY) is disordered. The span at 84–101 (SGGGSFGGGRKSYGGSRY) shows a compositional bias: gly residues.

In Synechocystis sp. (strain ATCC 27184 / PCC 6803 / Kazusa), this protein is Putative RNA-binding protein RbpA (rbpA).